The chain runs to 615 residues: 1-deoxy-D-xylulose-5-phosphate synthase (615 aa).

Thiamine diphosphate-binding positions include H76 and 117-119 (GHS). Position 148 (D148) interacts with Mg(2+). Residues 149-150 (GA), N177, Y284, and E365 each bind thiamine diphosphate. Mg(2+) is bound at residue N177.

This sequence belongs to the transketolase family. DXPS subfamily. In terms of assembly, homodimer. Mg(2+) is required as a cofactor. The cofactor is thiamine diphosphate.

The enzyme catalyses D-glyceraldehyde 3-phosphate + pyruvate + H(+) = 1-deoxy-D-xylulose 5-phosphate + CO2. The protein operates within metabolic intermediate biosynthesis; 1-deoxy-D-xylulose 5-phosphate biosynthesis; 1-deoxy-D-xylulose 5-phosphate from D-glyceraldehyde 3-phosphate and pyruvate: step 1/1. Catalyzes the acyloin condensation reaction between C atoms 2 and 3 of pyruvate and glyceraldehyde 3-phosphate to yield 1-deoxy-D-xylulose-5-phosphate (DXP). The polypeptide is 1-deoxy-D-xylulose-5-phosphate synthase (Francisella tularensis subsp. tularensis (strain FSC 198)).